The chain runs to 216 residues: Inorganic pyrophosphatase (216 aa).

Residues Lys39, Arg53, and Tyr65 each contribute to the substrate site. Asp93, Asp98, and Asp131 together coordinate Mg(2+). Residue Tyr168 coordinates substrate.

Belongs to the PPase family. In terms of assembly, homohexamer. It depends on Mg(2+) as a cofactor.

Its subcellular location is the cytoplasm. The enzyme catalyses diphosphate + H2O = 2 phosphate + H(+). Its function is as follows. Catalyzes the hydrolysis of inorganic pyrophosphate (PPi) forming two phosphate ions. The chain is Inorganic pyrophosphatase from Chlamydia caviae (strain ATCC VR-813 / DSM 19441 / 03DC25 / GPIC) (Chlamydophila caviae).